We begin with the raw amino-acid sequence, 68 residues long: Bifunctional protein GlmU (68 aa).

UDP-N-acetyl-alpha-D-glucosamine is bound by residues Leu-9 to Gly-12 and Lys-23.

In the N-terminal section; belongs to the N-acetylglucosamine-1-phosphate uridyltransferase family. The protein in the C-terminal section; belongs to the transferase hexapeptide repeat family. As to quaternary structure, homotrimer. The cofactor is Mg(2+).

It localises to the cytoplasm. It catalyses the reaction alpha-D-glucosamine 1-phosphate + acetyl-CoA = N-acetyl-alpha-D-glucosamine 1-phosphate + CoA + H(+). It carries out the reaction N-acetyl-alpha-D-glucosamine 1-phosphate + UTP + H(+) = UDP-N-acetyl-alpha-D-glucosamine + diphosphate. It functions in the pathway nucleotide-sugar biosynthesis; UDP-N-acetyl-alpha-D-glucosamine biosynthesis; N-acetyl-alpha-D-glucosamine 1-phosphate from alpha-D-glucosamine 6-phosphate (route II): step 2/2. Its pathway is nucleotide-sugar biosynthesis; UDP-N-acetyl-alpha-D-glucosamine biosynthesis; UDP-N-acetyl-alpha-D-glucosamine from N-acetyl-alpha-D-glucosamine 1-phosphate: step 1/1. The protein operates within bacterial outer membrane biogenesis; LPS lipid A biosynthesis. In terms of biological role, catalyzes the last two sequential reactions in the de novo biosynthetic pathway for UDP-N-acetylglucosamine (UDP-GlcNAc). The C-terminal domain catalyzes the transfer of acetyl group from acetyl coenzyme A to glucosamine-1-phosphate (GlcN-1-P) to produce N-acetylglucosamine-1-phosphate (GlcNAc-1-P), which is converted into UDP-GlcNAc by the transfer of uridine 5-monophosphate (from uridine 5-triphosphate), a reaction catalyzed by the N-terminal domain. This Priestia megaterium (Bacillus megaterium) protein is Bifunctional protein GlmU (glmU).